Reading from the N-terminus, the 278-residue chain is Protoheme IX farnesyltransferase (278 aa).

Transmembrane regions (helical) follow at residues 12–32 (VIWLLILSSVVGYVYAAGTVD), 36–56 (LAALTAAATLAVGGSAAFNHY), 72–92 (PLPAGAIPPSNALVYSLALSA), 105–124 (LPGVFVALGWFFYAVVYTVW), 130–150 (WLNILGGGFAGNATFLGGYAL), 157–177 (LPAVLISFAIYLWIPSHIWAL), 204–224 (AIISALNIASAAYILWLYLVF), 228–248 (LPGLALVLAGVAGTVATSALA), and 257–277 (MWRMYKASSPILTLFLLALVF).

The protein belongs to the UbiA prenyltransferase family. Protoheme IX farnesyltransferase subfamily.

The protein localises to the cell membrane. The enzyme catalyses heme b + (2E,6E)-farnesyl diphosphate + H2O = Fe(II)-heme o + diphosphate. The protein operates within porphyrin-containing compound metabolism; heme O biosynthesis; heme O from protoheme: step 1/1. Functionally, converts heme B (protoheme IX) to heme O by substitution of the vinyl group on carbon 2 of heme B porphyrin ring with a hydroxyethyl farnesyl side group. This chain is Protoheme IX farnesyltransferase, found in Pyrobaculum neutrophilum (strain DSM 2338 / JCM 9278 / NBRC 100436 / V24Sta) (Thermoproteus neutrophilus).